Reading from the N-terminus, the 454-residue chain is tRNA modification GTPase MnmE (454 aa).

The (6S)-5-formyl-5,6,7,8-tetrahydrofolate site is built by R23, E80, and K120. Residues G216–G377 form the TrmE-type G domain. Position 226 (N226) interacts with K(+). GTP contacts are provided by residues N226–S231, T245–T251, D270–G273, N335–D338, and S358–R360. S230 serves as a coordination point for Mg(2+). Positions 245, 247, and 250 each coordinate K(+). T251 is a binding site for Mg(2+). K454 contributes to the (6S)-5-formyl-5,6,7,8-tetrahydrofolate binding site.

The protein belongs to the TRAFAC class TrmE-Era-EngA-EngB-Septin-like GTPase superfamily. TrmE GTPase family. Homodimer. Heterotetramer of two MnmE and two MnmG subunits. Requires K(+) as cofactor.

The protein resides in the cytoplasm. Functionally, exhibits a very high intrinsic GTPase hydrolysis rate. Involved in the addition of a carboxymethylaminomethyl (cmnm) group at the wobble position (U34) of certain tRNAs, forming tRNA-cmnm(5)s(2)U34. The sequence is that of tRNA modification GTPase MnmE from Salmonella paratyphi A (strain ATCC 9150 / SARB42).